Consider the following 469-residue polypeptide: Cysteine--tRNA ligase (469 aa).

Zn(2+) is bound at residue cysteine 29. A 'HIGH' region motif is present at residues proline 31–asparagine 41. 3 residues coordinate Zn(2+): cysteine 210, histidine 235, and glutamate 239. The 'KMSKS' region signature appears at lysine 267–serine 271. An ATP-binding site is contributed by lysine 270.

It belongs to the class-I aminoacyl-tRNA synthetase family. As to quaternary structure, monomer. Requires Zn(2+) as cofactor.

The protein resides in the cytoplasm. The catalysed reaction is tRNA(Cys) + L-cysteine + ATP = L-cysteinyl-tRNA(Cys) + AMP + diphosphate. This chain is Cysteine--tRNA ligase, found in Thermosipho melanesiensis (strain DSM 12029 / CIP 104789 / BI429).